The primary structure comprises 557 residues: CTP synthase (557 aa).

The tract at residues 1 to 267 is amidoligase domain; that stretch reads MAKFVFVTGG…CREVLDVLDL (267 aa). CTP is bound at residue S13. S13 contacts UTP. Residues 14 to 19 and D71 each bind ATP; that span reads SIGKGI. Mg(2+)-binding residues include D71 and E141. CTP is bound by residues 148–150, 188–193, and K224; these read DIE and KTKPTQ. UTP-binding positions include 188-193 and K224; that span reads KTKPTQ. Residues 292-534 form the Glutamine amidotransferase type-1 domain; that stretch reads KVALVGKYVQ…IEAAQQRLPC (243 aa). G354 provides a ligand contact to L-glutamine. C381 serves as the catalytic Nucleophile; for glutamine hydrolysis. L-glutamine is bound by residues 382-385, E405, and R462; that span reads LGMQ. Residues H507 and E509 contribute to the active site. A disordered region spans residues 532 to 557; it reads LPCSPSEAMRQQNNSAAGSSHPSLQP. Positions 540-557 are enriched in polar residues; the sequence is MRQQNNSAAGSSHPSLQP.

It belongs to the CTP synthase family. In terms of assembly, homotetramer.

The enzyme catalyses UTP + L-glutamine + ATP + H2O = CTP + L-glutamate + ADP + phosphate + 2 H(+). The catalysed reaction is L-glutamine + H2O = L-glutamate + NH4(+). It carries out the reaction UTP + NH4(+) + ATP = CTP + ADP + phosphate + 2 H(+). It participates in pyrimidine metabolism; CTP biosynthesis via de novo pathway; CTP from UDP: step 2/2. Allosterically activated by GTP, when glutamine is the substrate; GTP has no effect on the reaction when ammonia is the substrate. The allosteric effector GTP functions by stabilizing the protein conformation that binds the tetrahedral intermediate(s) formed during glutamine hydrolysis. Inhibited by the product CTP, via allosteric rather than competitive inhibition. Catalyzes the ATP-dependent amination of UTP to CTP with either L-glutamine or ammonia as the source of nitrogen. Regulates intracellular CTP levels through interactions with the four ribonucleotide triphosphates. In Synechococcus sp. (strain CC9311), this protein is CTP synthase.